A 274-amino-acid polypeptide reads, in one-letter code: Rhamnulose-1-phosphate aldolase (274 aa).

Glutamate 117 is an active-site residue. 3 residues coordinate Zn(2+): histidine 141, histidine 143, and histidine 212.

Belongs to the aldolase class II family. RhaD subfamily. Homotetramer. It depends on Zn(2+) as a cofactor.

Its subcellular location is the cytoplasm. It carries out the reaction L-rhamnulose 1-phosphate = (S)-lactaldehyde + dihydroxyacetone phosphate. The protein operates within carbohydrate degradation; L-rhamnose degradation; glycerone phosphate from L-rhamnose: step 3/3. In terms of biological role, catalyzes the reversible cleavage of L-rhamnulose-1-phosphate to dihydroxyacetone phosphate (DHAP) and L-lactaldehyde. The protein is Rhamnulose-1-phosphate aldolase of Escherichia coli O17:K52:H18 (strain UMN026 / ExPEC).